The following is a 206-amino-acid chain: MVEKQKINEVIVVEGRDDTANLKRYFDCETYETGGSSIDDRDLERLKRLEDKRGIIVFTDPDFQGERIRKIIMQAVPNAKHAFLNRDEARPKGKGSLGVEHANFEALNQALAEVFGGEKVTDEFGSAKTQEPSSDRSSVSKKELLTELTQTDLMSFGLVMAADSRKRREFLCEQLRIGYANGKQIKKRLNMFKITKEQIENVMKNY.

A Toprim domain is found at 8 to 91; sequence NEVIVVEGRD…AFLNRDEARP (84 aa). Mg(2+)-binding residues include Glu-14, Asp-60, and Asp-62.

Belongs to the ribonuclease M5 family. Requires Mg(2+) as cofactor.

It localises to the cytoplasm. The catalysed reaction is Endonucleolytic cleavage of RNA, removing 21 and 42 nucleotides, respectively, from the 5'- and 3'-termini of a 5S-rRNA precursor.. In terms of biological role, required for correct processing of both the 5' and 3' ends of 5S rRNA precursor. Cleaves both sides of a double-stranded region yielding mature 5S rRNA in one step. The polypeptide is Ribonuclease M5 (Lactococcus lactis subsp. lactis (strain IL1403) (Streptococcus lactis)).